The chain runs to 352 residues: MRGAYYVLIALLVVASSQTSAESGHQLQVYDHDFVAADTAAATTLPRQFLRGSRNVPGDLAHEERAITSELVEEGAKLIPRAAENVEEISRVAEAVGKRPRVAEEDVLNKASGANEAFKKPRNTATDDAFQGISTEQLLPLSYKQWDTEIKSMRIPKPEKYQNNIQSVYDAFVDVCDEDLKPTISETARLWNLFDRSFKPLTTRLHQQALAQFAKEYVLRDELRLKTEWARMNERTMPNRAGMLNMKLNWHFQRWVRMYNKFGERRSELIGTPLNVARSRGGTTGASRGTALHRHSIVPLNAASTSKGKSSVFTERSQRTFDDNTDIASPPSKHIKGQSSELVEPEGHRSKP.

A signal peptide spans Met1–Ala21. Residues Gln48 to Arg65 carry the RxLR-dEER motif. The span at Arg280–Thr290 shows a compositional bias: low complexity. Residues Arg280 to Pro352 are disordered. Residues Ala302–Glu315 show a composition bias toward polar residues.

This sequence belongs to the RxLR effector family.

The protein localises to the secreted. The protein resides in the host nucleus. In terms of biological role, secreted effector that acts as an elicitor that induces cell death in host plant cells. In Plasmopara viticola (Downy mildew of grapevine), this protein is Secreted RxLR effector protein 122.